Consider the following 309-residue polypeptide: Homoserine O-succinyltransferase (309 aa).

Residue Cys142 is the Acyl-thioester intermediate of the active site. Substrate is bound by residues Lys163 and Ser192. Catalysis depends on His235, which acts as the Proton acceptor. Residue Glu237 is part of the active site. Arg249 provides a ligand contact to substrate.

This sequence belongs to the MetA family. As to quaternary structure, homodimer.

The protein localises to the cytoplasm. It catalyses the reaction L-homoserine + succinyl-CoA = O-succinyl-L-homoserine + CoA. It participates in amino-acid biosynthesis; L-methionine biosynthesis via de novo pathway; O-succinyl-L-homoserine from L-homoserine: step 1/1. In terms of biological role, transfers a succinyl group from succinyl-CoA to L-homoserine, forming succinyl-L-homoserine. This chain is Homoserine O-succinyltransferase, found in Escherichia coli O157:H7.